Here is a 338-residue protein sequence, read N- to C-terminus: Ketol-acid reductoisomerase (NADP(+)) (338 aa).

The 181-residue stretch at 1 to 181 (MQVYYDKDCD…GGGRTGIIET (181 aa)) folds into the KARI N-terminal Rossmann domain. NADP(+)-binding positions include 24 to 27 (FGSQ), Arg47, Ser50, Ser52, and 82 to 85 (DEFQ). The active site involves His107. Gly133 provides a ligand contact to NADP(+). The KARI C-terminal knotted domain occupies 182–327 (TFKDETETDL…EKLRSMMPWI (146 aa)). Mg(2+)-binding residues include Asp190, Glu194, Glu226, and Glu230. Ser251 contacts substrate.

This sequence belongs to the ketol-acid reductoisomerase family. The cofactor is Mg(2+).

The enzyme catalyses (2R)-2,3-dihydroxy-3-methylbutanoate + NADP(+) = (2S)-2-acetolactate + NADPH + H(+). The catalysed reaction is (2R,3R)-2,3-dihydroxy-3-methylpentanoate + NADP(+) = (S)-2-ethyl-2-hydroxy-3-oxobutanoate + NADPH + H(+). Its pathway is amino-acid biosynthesis; L-isoleucine biosynthesis; L-isoleucine from 2-oxobutanoate: step 2/4. It functions in the pathway amino-acid biosynthesis; L-valine biosynthesis; L-valine from pyruvate: step 2/4. Its function is as follows. Involved in the biosynthesis of branched-chain amino acids (BCAA). Catalyzes an alkyl-migration followed by a ketol-acid reduction of (S)-2-acetolactate (S2AL) to yield (R)-2,3-dihydroxy-isovalerate. In the isomerase reaction, S2AL is rearranged via a Mg-dependent methyl migration to produce 3-hydroxy-3-methyl-2-ketobutyrate (HMKB). In the reductase reaction, this 2-ketoacid undergoes a metal-dependent reduction by NADPH to yield (R)-2,3-dihydroxy-isovalerate. The chain is Ketol-acid reductoisomerase (NADP(+)) from Marinobacter nauticus (strain ATCC 700491 / DSM 11845 / VT8) (Marinobacter aquaeolei).